Consider the following 519-residue polypeptide: ATP synthase subunit beta, mitochondrial (519 aa).

Residues 1-21 (MLTRFRSAVLRGAVSITGARA) constitute a mitochondrion transit peptide. Residues 184 to 191 (GAGVGKTV) and R216 each bind ATP.

This sequence belongs to the ATPase alpha/beta chains family. F-type ATPases have 2 components, F(1) - the catalytic core - and F(o) - the membrane proton channel. F(1) has five subunits: alpha(3), beta(3), gamma(1), delta(1), epsilon(1), plus the additional subunit P18 (Tb427.05.1710) that is not present in F(1)F(o) ATP synthase from metazoa. Subunit P18 (Tb927.5.1710) interacts with the alpha subunit with a 1:1 stoichiometry; the interaction is direct. Subunit gamma is part of the central stalk. F(o) has three main subunits: a, b and c. The trypanosomal ATPase complex contains additional subunits that are not present in the F(1)F(o) ATP synthase from metazoa.

It is found in the mitochondrion. Its subcellular location is the mitochondrion inner membrane. The enzyme catalyses ATP + H2O + 4 H(+)(in) = ADP + phosphate + 5 H(+)(out). Mitochondrial membrane ATP synthase (F(1)F(o) ATP synthase) produces ATP from ADP in the presence of a proton gradient across the membrane which is generated by electron transport complexes of the respiratory chain. F-type ATPases consist of two structural domains, F(1) - containing the extramembraneous catalytic core, and F(o) - containing the membrane proton channel, linked together by a central stalk and a peripheral stalk. During catalysis, ATP synthesis in the catalytic domain of F(1) is coupled via a rotary mechanism of the central stalk subunits to proton translocation. Subunits alpha and beta form the catalytic core in F(1). Rotation of the central stalk against the surrounding alpha(3)beta(3) subunits leads to hydrolysis of ATP in three separate catalytic sites on the beta subunits. Contrary to the procyclic, insect form that requires F(1)F(o) ATP synthase for ATP synthesis, the bloodstream form relies on ATP hydrolysis by F(1)F(o) ATP synthase to maintain its mitochondrial membrane potential. The protein is ATP synthase subunit beta, mitochondrial of Trypanosoma brucei brucei.